The chain runs to 467 residues: 3-isopropylmalate dehydratase large subunit (467 aa).

[4Fe-4S] cluster is bound by residues C347, C407, and C410.

This sequence belongs to the aconitase/IPM isomerase family. LeuC type 1 subfamily. In terms of assembly, heterodimer of LeuC and LeuD. It depends on [4Fe-4S] cluster as a cofactor.

It carries out the reaction (2R,3S)-3-isopropylmalate = (2S)-2-isopropylmalate. The protein operates within amino-acid biosynthesis; L-leucine biosynthesis; L-leucine from 3-methyl-2-oxobutanoate: step 2/4. In terms of biological role, catalyzes the isomerization between 2-isopropylmalate and 3-isopropylmalate, via the formation of 2-isopropylmaleate. The protein is 3-isopropylmalate dehydratase large subunit of Nostoc sp. (strain PCC 7120 / SAG 25.82 / UTEX 2576).